Reading from the N-terminus, the 551-residue chain is Pyrroline-5-carboxylate reductase 1 (551 aa).

The interval 279 to 551 is disordered; sequence LYTQKQQNKK…RHEVKTEQIN (273 aa). 7 stretches are compositionally biased toward low complexity: residues 282–298, 306–342, 383–415, 424–441, 448–475, 487–496, and 503–520; these read QKQQ…QQHQ, QQHQ…YGHQ, QQYQ…SNQR, KSPQ…QPSS, QQQQ…QQQP, QQQQPQQQQQ, and YNNN…NNYN. Basic and acidic residues predominate over residues 537 to 551; the sequence is YHDEKRHEVKTEQIN.

The protein belongs to the pyrroline-5-carboxylate reductase family. Homodecamer; composed of 5 homodimers.

The enzyme catalyses L-proline + NADP(+) = (S)-1-pyrroline-5-carboxylate + NADPH + 2 H(+). It carries out the reaction L-proline + NAD(+) = (S)-1-pyrroline-5-carboxylate + NADH + 2 H(+). It functions in the pathway amino-acid biosynthesis; L-proline biosynthesis; L-proline from L-glutamate 5-semialdehyde: step 1/1. This is Pyrroline-5-carboxylate reductase 1 (pycr1) from Dictyostelium discoideum (Social amoeba).